Consider the following 177-residue polypeptide: uncharacterized protein (177 aa).

Low complexity predominate over residues Q100–H115. Positions Q100 to K135 are disordered. Residues W141 to Y158 traverse the membrane as a helical segment.

It localises to the membrane. This is an uncharacterized protein from Aedes vexans (Inland floodwater mosquito).